The sequence spans 145 residues: Ribonuclease P protein component (145 aa).

The segment at proline 121–leucine 145 is disordered. Residues histidine 134 to leucine 145 show a composition bias toward polar residues.

Belongs to the RnpA family. Consists of a catalytic RNA component (M1 or rnpB) and a protein subunit.

The enzyme catalyses Endonucleolytic cleavage of RNA, removing 5'-extranucleotides from tRNA precursor.. RNaseP catalyzes the removal of the 5'-leader sequence from pre-tRNA to produce the mature 5'-terminus. It can also cleave other RNA substrates such as 4.5S RNA. The protein component plays an auxiliary but essential role in vivo by binding to the 5'-leader sequence and broadening the substrate specificity of the ribozyme. This is Ribonuclease P protein component from Xanthomonas axonopodis pv. citri (strain 306).